The sequence spans 244 residues: Probable 2-phosphosulfolactate phosphatase (244 aa).

The protein belongs to the ComB family. Mg(2+) serves as cofactor.

It catalyses the reaction (2R)-O-phospho-3-sulfolactate + H2O = (2R)-3-sulfolactate + phosphate. The sequence is that of Probable 2-phosphosulfolactate phosphatase from Cyanothece sp. (strain PCC 7425 / ATCC 29141).